The primary structure comprises 154 residues: SsrA-binding protein (154 aa).

The interval 132-154 is disordered; that stretch reads KRESIKKRQDKRDMERALKRGAE.

The protein belongs to the SmpB family.

It is found in the cytoplasm. Functionally, required for rescue of stalled ribosomes mediated by trans-translation. Binds to transfer-messenger RNA (tmRNA), required for stable association of tmRNA with ribosomes. tmRNA and SmpB together mimic tRNA shape, replacing the anticodon stem-loop with SmpB. tmRNA is encoded by the ssrA gene; the 2 termini fold to resemble tRNA(Ala) and it encodes a 'tag peptide', a short internal open reading frame. During trans-translation Ala-aminoacylated tmRNA acts like a tRNA, entering the A-site of stalled ribosomes, displacing the stalled mRNA. The ribosome then switches to translate the ORF on the tmRNA; the nascent peptide is terminated with the 'tag peptide' encoded by the tmRNA and targeted for degradation. The ribosome is freed to recommence translation, which seems to be the essential function of trans-translation. This chain is SsrA-binding protein, found in Acaryochloris marina (strain MBIC 11017).